The following is a 488-amino-acid chain: MSTANTPEDEQKPSLNAFKQPRAFYLIFSIELWERFGYYGLQGIMAVYLVKMLGMSEAEAITVFAAFTALVYGFVAIGGWLGDKILGTKRVIVLGAIVLAIGYAMVAFSDHDKDMIYWGLATIAVGNGLFKANPSSLLATCYEKDDPQLDGAFTMYYMSINVGSFLSMLATPWLAANYGWDVAFALSVVGMLITLANFMLCRGWIKDKGSRPDFEPLNYLKLLLTLVGIVALTAVSTWLLHNNEVATWSLAIISLGIILIFARETFMMKGVARRKMIVAFLLMVEAVVFFVLYDQMPTSLNFFAIHNVEHAILGFSVEPEQFQSLNPFWIMLASPLLAAIYNFMGDKLPMPYKFTVGMFLSATAFLVLPLGASMANEAGIVSSWWLVASYGFQSIGELMISGLGLAMVAQLVPQRLMGFIMGAWFLTSAAAAIIAGKVASLMAVPEDVQNAHASLEIYSSVFLQIGIVTGVIALLMLFTAPMLSKMTQ.

Topologically, residues 1-35 (MSTANTPEDEQKPSLNAFKQPRAFYLIFSIELWER) are cytoplasmic. Residues 36–56 (FGYYGLQGIMAVYLVKMLGMS) traverse the membrane as a helical segment. At 57–60 (EAEA) the chain is on the periplasmic side. A helical transmembrane segment spans residues 61–81 (ITVFAAFTALVYGFVAIGGWL). At 82 to 90 (GDKILGTKR) the chain is on the cytoplasmic side. Residues 91–111 (VIVLGAIVLAIGYAMVAFSDH) traverse the membrane as a helical segment. Over 112-114 (DKD) the chain is Periplasmic. A helical membrane pass occupies residues 115-135 (MIYWGLATIAVGNGLFKANPS). At 136 to 154 (SLLATCYEKDDPQLDGAFT) the chain is on the cytoplasmic side. Residues 155 to 175 (MYYMSINVGSFLSMLATPWLA) form a helical membrane-spanning segment. Residues 176 to 179 (ANYG) lie on the Periplasmic side of the membrane. A helical transmembrane segment spans residues 180–200 (WDVAFALSVVGMLITLANFML). Over 201-219 (CRGWIKDKGSRPDFEPLNY) the chain is Cytoplasmic. The helical transmembrane segment at 220 to 240 (LKLLLTLVGIVALTAVSTWLL) threads the bilayer. His-241 is a topological domain (periplasmic). Residues 242–262 (NNEVATWSLAIISLGIILIFA) traverse the membrane as a helical segment. Residues 263 to 275 (RETFMMKGVARRK) lie on the Cytoplasmic side of the membrane. Residues 276-296 (MIVAFLLMVEAVVFFVLYDQM) traverse the membrane as a helical segment. Over 297–324 (PTSLNFFAIHNVEHAILGFSVEPEQFQS) the chain is Periplasmic. The helical transmembrane segment at 325–345 (LNPFWIMLASPLLAAIYNFMG) threads the bilayer. The Cytoplasmic segment spans residues 346 to 353 (DKLPMPYK). The chain crosses the membrane as a helical span at residues 354 to 374 (FTVGMFLSATAFLVLPLGASM). Residues 375-391 (ANEAGIVSSWWLVASYG) lie on the Periplasmic side of the membrane. A helical membrane pass occupies residues 392 to 412 (FQSIGELMISGLGLAMVAQLV). Over 413–415 (PQR) the chain is Cytoplasmic. The helical transmembrane segment at 416 to 436 (LMGFIMGAWFLTSAAAAIIAG) threads the bilayer. Topologically, residues 437–460 (KVASLMAVPEDVQNAHASLEIYSS) are periplasmic. A helical transmembrane segment spans residues 461–481 (VFLQIGIVTGVIALLMLFTAP). Over 482–488 (MLSKMTQ) the chain is Cytoplasmic.

The protein belongs to the major facilitator superfamily. Proton-dependent oligopeptide transporter (POT/PTR) (TC 2.A.17) family. DtpA subfamily.

The protein localises to the cell inner membrane. In terms of biological role, proton-dependent permease that transports di- and tripeptides. This Proteus mirabilis (strain HI4320) protein is Dipeptide and tripeptide permease A.